A 34-amino-acid polypeptide reads, in one-letter code: Endoglucanase 1 (34 aa).

It catalyses the reaction Endohydrolysis of (1-&gt;4)-beta-D-glucosidic linkages in cellulose, lichenin and cereal beta-D-glucans.. The chain is Endoglucanase 1 from Sclerotinia sclerotiorum (White mold).